The chain runs to 5801 residues: uncharacterized protein (5801 aa).

Disordered stretches follow at residues 1114 to 1136 (DDDN…NKKI), 1827 to 1846 (KDRS…SINN), 2040 to 2109 (NNGE…SPLF), 3351 to 3392 (EKSN…NNSG), 5134 to 5168 (DNNN…SESD), 5478 to 5573 (ISDP…EDII), and 5600 to 5638 (HDKD…ETPG). 5 stretches are compositionally biased toward low complexity: residues 1118 to 1134 (NNSN…NNNK), 1831 to 1846 (SSSS…SINN), 2048 to 2096 (QQLQ…QQQQ), 3353 to 3392 (SNNN…NNSG), and 5135 to 5153 (NNNN…NNNN). A compositionally biased stretch (acidic residues) spans 5496–5573 (DNEEEEEDDD…EDEDEDEDII (78 aa)). A compositionally biased stretch (basic and acidic residues) spans 5617–5629 (QQPEKPQQPEKPQ).

This is an uncharacterized protein from Dictyostelium discoideum (Social amoeba).